The sequence spans 404 residues: MTDLAGTTRLLRAQGVTAPAGFRAAGVAAGIKASGALDLALVFNEGPDYAAAGVFTRNQVKAAPVLWTQQVLTTGRLRAVILNSGGANACTGPAGFADTHATAEAVAAALSDWGTETGAIEVAVCSTGLIGDRLPMDKLLAGVAHVVHEMHGGLVGGDEAAHAIMTTDNVPKQVALHHHDNWTVGGMAKGAGMLAPSLATMLCVLTTDAAAEPAALERALRRAAAATFDRLDIDGSCSTNDTVLLLSSGASEIPPAQADLDEAVLRVCDDLCAQLQADAEGVTKRVTVTVTGAATEDDALVAARQIARDSLVKTALFGSDPNWGRVLAAVGMAPITLDPDRISVSFNGAAVCVHGVGAPGAREVDLSDADIDITVDLGVGDGQARIRTTDLSHAYVEENSAYSS.

6 residues coordinate substrate: threonine 166, lysine 189, threonine 200, glutamate 280, asparagine 399, and serine 404. Catalysis depends on threonine 200, which acts as the Nucleophile.

The protein belongs to the ArgJ family. Heterotetramer of two alpha and two beta chains.

Its subcellular location is the cytoplasm. It catalyses the reaction N(2)-acetyl-L-ornithine + L-glutamate = N-acetyl-L-glutamate + L-ornithine. The enzyme catalyses L-glutamate + acetyl-CoA = N-acetyl-L-glutamate + CoA + H(+). It participates in amino-acid biosynthesis; L-arginine biosynthesis; L-ornithine and N-acetyl-L-glutamate from L-glutamate and N(2)-acetyl-L-ornithine (cyclic): step 1/1. Its pathway is amino-acid biosynthesis; L-arginine biosynthesis; N(2)-acetyl-L-ornithine from L-glutamate: step 1/4. Its function is as follows. Catalyzes two activities which are involved in the cyclic version of arginine biosynthesis: the synthesis of N-acetylglutamate from glutamate and acetyl-CoA as the acetyl donor, and of ornithine by transacetylation between N(2)-acetylornithine and glutamate. The sequence is that of Arginine biosynthesis bifunctional protein ArgJ from Mycobacterium bovis (strain ATCC BAA-935 / AF2122/97).